The following is an 848-amino-acid chain: Translation initiation factor IF-2 (848 aa).

The disordered stretch occupies residues 1-20 (MNESKGAVDSGLMSGKTERT). The tr-type G domain maps to 346-516 (PRAPVVTVMG…LLMAELLELK (171 aa)). The tract at residues 355–362 (GHVDHGKT) is G1. 355–362 (GHVDHGKT) contacts GTP. Positions 380–384 (GITQH) are G2. Residues 402–405 (DTPG) form a G3 region. Residues 402–406 (DTPGH) and 456–459 (NKID) contribute to the GTP site. The tract at residues 456 to 459 (NKID) is G4. A G5 region spans residues 492–494 (SAK).

This sequence belongs to the TRAFAC class translation factor GTPase superfamily. Classic translation factor GTPase family. IF-2 subfamily.

The protein resides in the cytoplasm. One of the essential components for the initiation of protein synthesis. Protects formylmethionyl-tRNA from spontaneous hydrolysis and promotes its binding to the 30S ribosomal subunits. Also involved in the hydrolysis of GTP during the formation of the 70S ribosomal complex. The polypeptide is Translation initiation factor IF-2 (Ehrlichia canis (strain Jake)).